The primary structure comprises 266 residues: MVTTLSYTERASHPSPLAKRLFSLMESKKTNLCASVDVRTTEELLKLVDTLGPYICLLKTHIDIIDDFSMESTVAPLLELSKEHNFLIFEDRKFADIGNTVKAQYAGGAFKIAQWADITNAHGVTGRGIVKGLKEAAQETTDEPRGLLMLAELSSKGSFAHGTYTEETVEIAKTDKDFCIGFIAQRDMGGREDGFDWIIMTPGVGLDDKGDSLGQQYRTVDEVVSGGCDIIIVGRGLFGKGRDPTVEGERYRKAGWDAYLKRYSAQ.

Residues D37, 59-61, 91-100, Y217, and R235 contribute to the substrate site; these read KTH and DRKFADIGNT. K93 serves as the catalytic Proton donor.

This sequence belongs to the OMP decarboxylase family.

It catalyses the reaction orotidine 5'-phosphate + H(+) = UMP + CO2. It participates in pyrimidine metabolism; UMP biosynthesis via de novo pathway; UMP from orotate: step 2/2. This chain is Orotidine 5'-phosphate decarboxylase (URA3), found in Cyberlindnera jadinii (Torula yeast).